Here is a 156-residue protein sequence, read N- to C-terminus: Superoxide dismutase [Cu-Zn] 2 (156 aa).

Cu cation contacts are provided by histidine 47, histidine 49, and histidine 64. Residues cysteine 58 and cysteine 147 are joined by a disulfide bond. Residues histidine 64, histidine 72, histidine 81, and aspartate 84 each coordinate Zn(2+). Histidine 121 lines the Cu cation pocket.

This sequence belongs to the Cu-Zn superoxide dismutase family. As to quaternary structure, homodimer. Cu cation serves as cofactor. The cofactor is Zn(2+).

The protein localises to the cytoplasm. The catalysed reaction is 2 superoxide + 2 H(+) = H2O2 + O2. Functionally, destroys radicals which are normally produced within the cells and which are toxic to biological systems. The sequence is that of Superoxide dismutase [Cu-Zn] 2 (SODCC.2) from Mesembryanthemum crystallinum (Common ice plant).